The chain runs to 566 residues: E3 ubiquitin-protein ligase RNF220 (566 aa).

Lys277 participates in a covalent cross-link: Glycyl lysine isopeptide (Lys-Gly) (interchain with G-Cter in SUMO2). The tract at residues 277 to 297 (KREGESPTASPHSSATDDLHH) is disordered. Ser390 carries the post-translational modification Phosphoserine. Residues 485–513 (EDSAVTTFEALKARVRELERQLSRGDRYK) adopt a coiled-coil conformation. A required for targeting to the cytoplasm region spans residues 514 to 522 (CLICMDSYS). The RING-type zinc-finger motif lies at 514 to 553 (CLICMDSYSMPLTSIQCWHVHCEECWLRTLGAKKLCPQCN).

As to quaternary structure, interacts with SIN3B. Interacts with CTNNB1 (via Armadillo repeats 2-8). Interacts with USP7 (via MATH domain). In terms of processing, auto-ubiquitinated; leads to proteasomal degradation. Ubiquitously expressed. Abundant in brain and spinal cord, particularly in the cerebellum and cerebral cortex. In fetal tissues expressed in the cerebellum, spinal cord and cortex.

The protein resides in the cytoplasm. It localises to the nucleus. The enzyme catalyses S-ubiquitinyl-[E2 ubiquitin-conjugating enzyme]-L-cysteine + [acceptor protein]-L-lysine = [E2 ubiquitin-conjugating enzyme]-L-cysteine + N(6)-ubiquitinyl-[acceptor protein]-L-lysine.. Its pathway is protein modification; protein ubiquitination. Its function is as follows. E3 ubiquitin-protein ligase that promotes the ubiquitination and proteasomal degradation of SIN3B. Independently of its E3 ligase activity, acts as a CTNNB1 stabilizer through USP7-mediated deubiquitination of CTNNB1 promoting Wnt signaling. Plays a critical role in the regulation of nuclear lamina. The protein is E3 ubiquitin-protein ligase RNF220 (RNF220) of Homo sapiens (Human).